The following is a 219-amino-acid chain: Histone H1.01 (219 aa).

Low complexity-rich tracts occupy residues 1–19 (MSET…GAKA) and 27–39 (AAGG…PAGP). Disordered stretches follow at residues 1–40 (MSET…AGPS) and 94–219 (LVQT…AKKK). Position 2 is an N-acetylserine (Ser-2). Residues 37 to 110 (AGPSVTELIT…GASGSFRLNK (74 aa)) form the H15 domain. Basic residues-rich tracts occupy residues 119-134 (APRK…KPAA), 142-159 (KKPK…KAKK), 167-185 (KAAK…KKAA), and 192-219 (KAVK…AKKK).

The protein belongs to the histone H1/H5 family.

The protein resides in the nucleus. It localises to the chromosome. Functionally, histones H1 are necessary for the condensation of nucleosome chains into higher-order structures. The chain is Histone H1.01 from Gallus gallus (Chicken).